A 188-amino-acid polypeptide reads, in one-letter code: Protein GrpE (188 aa).

The tract at residues 1 to 30 (MTKKTSHHKAEQKEKRAGEESGRESEVLDH) is disordered. Residues 8–30 (HKAEQKEKRAGEESGRESEVLDH) are compositionally biased toward basic and acidic residues.

The protein belongs to the GrpE family. In terms of assembly, homodimer.

It localises to the cytoplasm. Functionally, participates actively in the response to hyperosmotic and heat shock by preventing the aggregation of stress-denatured proteins, in association with DnaK and GrpE. It is the nucleotide exchange factor for DnaK and may function as a thermosensor. Unfolded proteins bind initially to DnaJ; upon interaction with the DnaJ-bound protein, DnaK hydrolyzes its bound ATP, resulting in the formation of a stable complex. GrpE releases ADP from DnaK; ATP binding to DnaK triggers the release of the substrate protein, thus completing the reaction cycle. Several rounds of ATP-dependent interactions between DnaJ, DnaK and GrpE are required for fully efficient folding. The polypeptide is Protein GrpE (Chlorobium phaeobacteroides (strain BS1)).